The chain runs to 347 residues: Dihydroorotase (347 aa).

Zn(2+) is bound by residues His14 and His16. Substrate-binding positions include 16 to 18 and Asn42; that span reads HLR. The Zn(2+) site is built by Lys100, His137, and His175. Lys100 is subject to N6-carboxylysine. A substrate-binding site is contributed by His137. Leu220 lines the substrate pocket. Asp248 lines the Zn(2+) pocket. Asp248 is a catalytic residue. The substrate site is built by His252 and Ala264.

This sequence belongs to the metallo-dependent hydrolases superfamily. DHOase family. Class II DHOase subfamily. In terms of assembly, homodimer. Zn(2+) serves as cofactor.

It carries out the reaction (S)-dihydroorotate + H2O = N-carbamoyl-L-aspartate + H(+). The protein operates within pyrimidine metabolism; UMP biosynthesis via de novo pathway; (S)-dihydroorotate from bicarbonate: step 3/3. Functionally, catalyzes the reversible cyclization of carbamoyl aspartate to dihydroorotate. This Jannaschia sp. (strain CCS1) protein is Dihydroorotase.